Reading from the N-terminus, the 280-residue chain is Intimin (280 aa).

A Big-1 domain is found at 1-92 (ITEIKADKTT…MLKLLEVEFF (92 aa)). Residues 127-173 (ANGGNGKYTWYSANPAIASVDPSSGQVTLKDKGETTITVVSGDKQTA) form the BIG2 domain. A disulfide bridge connects residues Cys-201 and Cys-278.

This sequence belongs to the intimin/invasin family.

It is found in the cell outer membrane. Its function is as follows. An inverse autotransporter. The polypeptide is Intimin (eaeA) (Hafnia alvei).